The primary structure comprises 497 residues: Putative endothelial lipase (497 aa).

The N-terminal stretch at 1–23 (MRACPFLLLLLLPLLLSLGRIAA) is a signal peptide. Cysteines 73 and 86 form a disulfide. Residues Asn-89 and Asn-145 are each glycosylated (N-linked (GlcNAc...) asparagine). The active-site Nucleophile is Ser-178. The active-site Charge relay system is the Asp-202. Cys-262 and Cys-282 are oxidised to a cystine. The active-site Charge relay system is the His-284. Intrachain disulfides connect Cys-307–Cys-326 and Cys-318–Cys-321. 335 to 347 (KMRNKRNSKMYLK) lines the heparin pocket. Residues 357–492 (FHYQLKIHVF…CLKMVKVEKH (136 aa)) form the PLAT domain. Asn-403 is a glycosylation site (N-linked (GlcNAc...) asparagine).

The protein belongs to the AB hydrolase superfamily. Lipase family. As to quaternary structure, head to tail homodimer. Expressed by the venom gland.

Its subcellular location is the secreted. The catalysed reaction is a triacylglycerol + H2O = a diacylglycerol + a fatty acid + H(+). With respect to regulation, inhibited by serum. Functionally, has phospholipase and triglyceride lipase activities. This chain is Putative endothelial lipase, found in Crotalus adamanteus (Eastern diamondback rattlesnake).